Here is a 149-residue protein sequence, read N- to C-terminus: Small ribosomal subunit protein uS13 (149 aa).

This sequence belongs to the universal ribosomal protein uS13 family. Part of the 30S ribosomal subunit. Forms a loose heterodimer with protein S19. Forms two bridges to the 50S subunit in the 70S ribosome.

Its function is as follows. Located at the top of the head of the 30S subunit, it contacts several helices of the 16S rRNA. In the 70S ribosome it contacts the 23S rRNA (bridge B1a) and protein L5 of the 50S subunit (bridge B1b), connecting the 2 subunits; these bridges are implicated in subunit movement. The polypeptide is Small ribosomal subunit protein uS13 (Thermococcus kodakarensis (strain ATCC BAA-918 / JCM 12380 / KOD1) (Pyrococcus kodakaraensis (strain KOD1))).